Reading from the N-terminus, the 255-residue chain is Methionine aminopeptidase (255 aa).

Histidine 76 provides a ligand contact to substrate. 3 residues coordinate a divalent metal cation: aspartate 93, aspartate 104, and histidine 167. Histidine 174 provides a ligand contact to substrate. A divalent metal cation-binding residues include glutamate 201 and glutamate 232.

Belongs to the peptidase M24A family. Methionine aminopeptidase type 1 subfamily. Monomer. Requires Co(2+) as cofactor. Zn(2+) is required as a cofactor. It depends on Mn(2+) as a cofactor. Fe(2+) serves as cofactor.

It catalyses the reaction Release of N-terminal amino acids, preferentially methionine, from peptides and arylamides.. Functionally, removes the N-terminal methionine from nascent proteins. The N-terminal methionine is often cleaved when the second residue in the primary sequence is small and uncharged (Met-Ala-, Cys, Gly, Pro, Ser, Thr, or Val). Requires deformylation of the N(alpha)-formylated initiator methionine before it can be hydrolyzed. This Treponema pallidum (strain Nichols) protein is Methionine aminopeptidase.